The chain runs to 419 residues: Histidine--tRNA ligase (419 aa).

It belongs to the class-II aminoacyl-tRNA synthetase family.

It localises to the cytoplasm. It catalyses the reaction tRNA(His) + L-histidine + ATP = L-histidyl-tRNA(His) + AMP + diphosphate + H(+). This is Histidine--tRNA ligase from Pyrobaculum aerophilum (strain ATCC 51768 / DSM 7523 / JCM 9630 / CIP 104966 / NBRC 100827 / IM2).